A 304-amino-acid chain; its full sequence is Non-specific ribonucleoside hydrolase RihC (304 aa).

H233 is a catalytic residue.

The protein belongs to the IUNH family. RihC subfamily.

Its function is as follows. Hydrolyzes both purine and pyrimidine ribonucleosides with a broad-substrate specificity. This is Non-specific ribonucleoside hydrolase RihC from Escherichia coli (strain 55989 / EAEC).